A 384-amino-acid chain; its full sequence is MFGSLRTYIVSSKSISATPAFEALESALGTAKIAGIRCGITSHSPWEDVFQLAQDIQATDADLIITLGGCSITDAVKLAKLFIPNNVSTIPGAEELFARIRADESVKPATIPVINVPTTLSGSEFTCAGGATNLTTGHKQVTMHSSLYADVVVLDPRLSISTPRQVWLATGVRAIDHFVEGLYGNVAALFTDMREELGNEANEDIEKVIAGALGSLLTSLLSTKENWNDEEARLQAFLAVKECPRAGHNGIGASHGIGHQLGPLGVGHGETSCIILPWVLRYNWQHGDETARRRLGLAIDTFWGQEKVAETLGATGLSRKDADLYDVVGAYISALGLPRTLGQFDIKEEQLEGLAESAMKDWCTKVNPVTLTKDKVLDILRNAK.

Belongs to the iron-containing alcohol dehydrogenase family. Fe cation serves as cofactor.

Its pathway is mycotoxin biosynthesis. Functionally, dehydrogenase; part of the gene cluster that mediates the biosynthesis of the host-selective toxins (HSTs) AAL-toxins, sphinganine-analog mycotoxins responsible for Alternaria stem canker on tomato by the tomato pathotype. The biosynthesis starts with the polyketide synthase ALT1-catalyzed C-16 carbon chain assembly from one starter acetyl-CoA unit with malonyl-CoA extender units. ALT1 also selectively transfers methyl groups at the first and the third cycle of chain elongation for AAL toxin. The C-16 polyketide chain is released from the enzyme by a nucleophilic attack of a carbanion, which is derived from R-carbon of glycin by decarboxylation, on the carbonyl carbon of polyketide acyl chain. This step is probably catalyzed by a pyridoxal 5'-phosphate-dependent aminoacyl transferase ALT4. The respective functions of the other enzymes encoded by the cluster have still to be elucidated. The sphingosine N-acyltransferase-like protein ALT7 seems not to act as a resistance/self-tolerance factor against the toxin in the toxin biosynthetic gene cluster, contrary to what is expected. This is Dehydrogenase ALT3 from Alternaria alternata (Alternaria rot fungus).